We begin with the raw amino-acid sequence, 195 residues long: Nucleoside-triphosphatase THEP1 (195 aa).

ATP-binding positions include 11-18 (GRPGSGKS) and 103-110 (VVVIDEIG).

This sequence belongs to the THEP1 NTPase family.

It catalyses the reaction a ribonucleoside 5'-triphosphate + H2O = a ribonucleoside 5'-diphosphate + phosphate + H(+). Its function is as follows. Has nucleotide phosphatase activity towards ATP, GTP, CTP, TTP and UTP. May hydrolyze nucleoside diphosphates with lower efficiency. In Korarchaeum cryptofilum (strain OPF8), this protein is Nucleoside-triphosphatase THEP1.